The chain runs to 450 residues: Probable ECA polymerase (450 aa).

A run of 11 helical transmembrane segments spans residues 6 to 26, 37 to 57, 63 to 83, 118 to 138, 155 to 175, 181 to 201, 207 to 227, 228 to 248, 341 to 361, 378 to 398, and 410 to 430; these read FSGL…LTWF, VFFS…TSVL, VGVA…CFYA, VILM…NGFL, GVAL…VYFL, AWLF…MIVG, IIIA…ISLW, MLAA…LKRY, LVVM…GLII, YKAA…IVLA, and VFFI…YWLF.

The protein belongs to the WzyE family. Probably part of a complex composed of WzxE, WzyE and WzzE.

It localises to the cell inner membrane. The protein operates within bacterial outer membrane biogenesis; enterobacterial common antigen biosynthesis. Its function is as follows. Probably involved in the polymerization of enterobacterial common antigen (ECA) trisaccharide repeat units. This Escherichia fergusonii (strain ATCC 35469 / DSM 13698 / CCUG 18766 / IAM 14443 / JCM 21226 / LMG 7866 / NBRC 102419 / NCTC 12128 / CDC 0568-73) protein is Probable ECA polymerase.